A 723-amino-acid polypeptide reads, in one-letter code: uncharacterized protein (723 aa).

Over residues 1-12 (MTGKKKNRHQKK) the composition is skewed to basic residues. 4 disordered regions span residues 1-166 (MTGK…EKEI), 181-212 (IKRK…SGWG), 268-289 (LPLS…DNDN), and 391-455 (KNKS…NTST). Low complexity predominate over residues 30–42 (DETTTTTTTTTTT). Composition is skewed to basic and acidic residues over residues 45-129 (EETK…KTDD) and 149-166 (TDIK…EKEI). Residues 53 to 173 (IVENKDEDKK…KEIEDPNKKY (121 aa)) adopt a coiled-coil conformation. Positions 181 to 190 (IKRKKEKKVK) are enriched in basic residues. Over residues 193 to 204 (PVQPTPPVPAPA) the composition is skewed to pro residues. Acidic residues predominate over residues 272 to 288 (DTEDSDNDNDNGGDDND). Residues 397-455 (DENNNNNNNNNQQQPQQQQTTSPTLSTSPTSPKSPTTTTTNTTTTTTTNTNNNNNNTST) are compositionally biased toward low complexity.

This is an uncharacterized protein from Dictyostelium discoideum (Social amoeba).